We begin with the raw amino-acid sequence, 254 residues long: Keratin-associated protein 24-1 (254 aa).

6 tandem repeats follow at residues 193 to 202 (YISNSCQPQS), 203 to 212 (YLVRNYHYSS), 213 to 222 (YRPTSCRPLS), 223 to 232 (YLSRSFRSLS), 233 to 242 (YIPSTFPPLR), and 243 to 252 (YLCSGSRPLK). The segment at 193–252 (YISNSCQPQSYLVRNYHYSSYRPTSCRPLSYLSRSFRSLSYIPSTFPPLRYLCSGSRPLK) is 6 X 10 AA repeats of Y-[ILR]-[SVPC]-[NRTS]-[SNTG]-X-[QHRP]-[PSY]-[QSL]-[SRK].

It belongs to the PMG family. In terms of assembly, interacts with hair keratins. Specific expression in the middle/upper hair cuticle.

Its function is as follows. In the hair cortex, hair keratin intermediate filaments are embedded in an interfilamentous matrix, consisting of hair keratin-associated proteins (KRTAP), which are essential for the formation of a rigid and resistant hair shaft through their extensive disulfide bond cross-linking with abundant cysteine residues of hair keratins. The matrix proteins include the high-sulfur and high-glycine-tyrosine keratins. The sequence is that of Keratin-associated protein 24-1 (KRTAP24-1) from Homo sapiens (Human).